The following is a 788-amino-acid chain: Protein translocase subunit SecA 2 (788 aa).

ATP-binding positions include Q86, 104-108, and D493; that span reads GEGKT.

It belongs to the SecA family. As to quaternary structure, monomer and homodimer. Part of the essential Sec protein translocation apparatus which comprises SecA, SecYEG and auxiliary proteins SecDF. Other proteins may also be involved.

It localises to the cell membrane. The protein localises to the cytoplasm. It catalyses the reaction ATP + H2O + cellular proteinSide 1 = ADP + phosphate + cellular proteinSide 2.. Part of the Sec protein translocase complex. Interacts with the SecYEG preprotein conducting channel. Has a central role in coupling the hydrolysis of ATP to the transfer of proteins into and across the cell membrane, serving as an ATP-driven molecular motor driving the stepwise translocation of polypeptide chains across the membrane. The chain is Protein translocase subunit SecA 2 from Bacillus thuringiensis (strain Al Hakam).